We begin with the raw amino-acid sequence, 286 residues long: Nucleotide-binding protein PLES_48441 (286 aa).

8-15 (GRSGSGKS) is an ATP binding site. 60 to 63 (DARN) serves as a coordination point for GTP.

The protein belongs to the RapZ-like family.

In terms of biological role, displays ATPase and GTPase activities. The polypeptide is Nucleotide-binding protein PLES_48441 (Pseudomonas aeruginosa (strain LESB58)).